Consider the following 666-residue polypeptide: Chaperone protein dnaK1 (666 aa).

Thr198 carries the phosphothreonine; by autocatalysis modification.

The protein belongs to the heat shock protein 70 family.

Acts as a chaperone. This chain is Chaperone protein dnaK1 (dnaK1), found in Prochlorococcus marinus (strain SARG / CCMP1375 / SS120).